Consider the following 123-residue polypeptide: Sterol carrier protein 2 (123 aa).

The SCP2 domain occupies 16-113 (KEHLSTDAGK…GSLSAAQKFT (98 aa)). The short motif at 121–123 (SKL) is the Microbody targeting signal element.

As to expression, expressed in most tissues including seedlings, cotyledons, inflorescence, leaves, stems, roots, siliques and flower buds, with the highest levels in floral tissues and in maturing seeds.

The protein resides in the peroxisome. Functionally, enhances the transfer of lipids between membranes in vitro. Active on phosphatidylcholine (PC), 1-palmitoyl 2-oleoyl phosphatidylcholine (POPC) and ergosterol, and, to a lower extent, dimyristoyl phosphatidic acid, stigmasterol, desmosterol, beta-sitosterol and steryl glucoside. Inactive or poorly active on palmitic acid, stearoyl-coenzyme A, cholesterol, glucosylceramide and ceramide. Required during seeds and seedlings development. The polypeptide is Sterol carrier protein 2 (Arabidopsis thaliana (Mouse-ear cress)).